A 94-amino-acid chain; its full sequence is Large ribosomal subunit protein uL23 (94 aa).

Belongs to the universal ribosomal protein uL23 family. In terms of assembly, part of the 50S ribosomal subunit. Contacts protein L29, and trigger factor when it is bound to the ribosome.

Functionally, one of the early assembly proteins it binds 23S rRNA. One of the proteins that surrounds the polypeptide exit tunnel on the outside of the ribosome. Forms the main docking site for trigger factor binding to the ribosome. This chain is Large ribosomal subunit protein uL23, found in Roseiflexus castenholzii (strain DSM 13941 / HLO8).